The following is a 658-amino-acid chain: Threonine--tRNA ligase (658 aa).

A TGS domain is found at Met-1–Thr-61. Residues Asp-243 to Pro-535 are catalytic. Residues Cys-335, His-386, and His-512 each coordinate Zn(2+).

The protein belongs to the class-II aminoacyl-tRNA synthetase family. Homodimer. Requires Zn(2+) as cofactor.

It is found in the cytoplasm. It carries out the reaction tRNA(Thr) + L-threonine + ATP = L-threonyl-tRNA(Thr) + AMP + diphosphate + H(+). In terms of biological role, catalyzes the attachment of threonine to tRNA(Thr) in a two-step reaction: L-threonine is first activated by ATP to form Thr-AMP and then transferred to the acceptor end of tRNA(Thr). Also edits incorrectly charged L-seryl-tRNA(Thr). The chain is Threonine--tRNA ligase from Phenylobacterium zucineum (strain HLK1).